The chain runs to 197 residues: Phosphoheptose isomerase (197 aa).

In terms of domain architecture, SIS spans Leu-36–Glu-197. Residue Asn-51 to Gly-53 coordinates substrate. The Zn(2+) site is built by His-60 and Glu-64. Substrate-binding positions include Glu-64, Asn-93–Asp-94, Ser-119–Ser-121, Ser-124, and Gln-174. Positions 174 and 182 each coordinate Zn(2+).

Belongs to the SIS family. GmhA subfamily. As to quaternary structure, homotetramer. The cofactor is Zn(2+).

It is found in the cytoplasm. It catalyses the reaction 2 D-sedoheptulose 7-phosphate = D-glycero-alpha-D-manno-heptose 7-phosphate + D-glycero-beta-D-manno-heptose 7-phosphate. Its pathway is carbohydrate biosynthesis; D-glycero-D-manno-heptose 7-phosphate biosynthesis; D-glycero-alpha-D-manno-heptose 7-phosphate and D-glycero-beta-D-manno-heptose 7-phosphate from sedoheptulose 7-phosphate: step 1/1. Catalyzes the isomerization of sedoheptulose 7-phosphate in D-glycero-D-manno-heptose 7-phosphate. This Bordetella avium (strain 197N) protein is Phosphoheptose isomerase.